The chain runs to 1164 residues: DNA-directed RNA polymerase subunit beta (1164 aa).

2 disordered regions span residues 975–994 and 1143–1164; these read RSSLPNRDGERQVDDFGKSN and ANAALGINLSRDERPDADMDVS. Basic and acidic residues-rich tracts occupy residues 981-991 and 1152-1164; these read RDGERQVDDFG and SRDERPDADMDVS.

The protein belongs to the RNA polymerase beta chain family. In terms of assembly, the RNAP catalytic core consists of 2 alpha, 1 beta, 1 beta' and 1 omega subunit. When a sigma factor is associated with the core the holoenzyme is formed, which can initiate transcription.

It carries out the reaction RNA(n) + a ribonucleoside 5'-triphosphate = RNA(n+1) + diphosphate. Its function is as follows. DNA-dependent RNA polymerase catalyzes the transcription of DNA into RNA using the four ribonucleoside triphosphates as substrates. The polypeptide is DNA-directed RNA polymerase subunit beta (Corynebacterium jeikeium (strain K411)).